The chain runs to 390 residues: Elongation factor Tu 2 (390 aa).

The tr-type G domain occupies 10–203; that stretch reads KPHLNIGTMG…AVDTYVPMPE (194 aa). The interval 19–26 is G1; the sequence is GHVDHGKT. 19-26 is a GTP binding site; sequence GHVDHGKT. Residue Thr-26 participates in Mg(2+) binding. A G2 region spans residues 60 to 64; it reads GITIN. Residues 81–84 form a G3 region; that stretch reads DMPG. GTP is bound by residues 81–85 and 136–139; these read DMPGH and NKAD. Residues 136–139 form a G4 region; the sequence is NKAD. Residues 173–175 are G5; it reads SGL.

This sequence belongs to the TRAFAC class translation factor GTPase superfamily. Classic translation factor GTPase family. EF-Tu/EF-1A subfamily. Monomer.

It localises to the cytoplasm. The enzyme catalyses GTP + H2O = GDP + phosphate + H(+). Its function is as follows. GTP hydrolase that promotes the GTP-dependent binding of aminoacyl-tRNA to the A-site of ribosomes during protein biosynthesis. The protein is Elongation factor Tu 2 of Streptomyces avermitilis (strain ATCC 31267 / DSM 46492 / JCM 5070 / NBRC 14893 / NCIMB 12804 / NRRL 8165 / MA-4680).